Here is a 284-residue protein sequence, read N- to C-terminus: ASC1-like protein 3 (284 aa).

6 consecutive transmembrane segments (helical) span residues 9–29, 69–89, 108–128, 148–168, 195–215, and 243–263; these read SSFF…RFFL, LTYY…EPWS, LMLF…ALVA, ILIG…ILAL, FGLF…FWII, and MLLT…LMIM. Positions 60-267 constitute a TLC domain; it reads VKFSESIWKL…ICLMIMKQLN (208 aa).

It localises to the endoplasmic reticulum membrane. In terms of biological role, mediates resistance to sphinganine-analog mycotoxins (SAMs) by restoring the sphingolipid biosynthesis. Could salvage the transport of GPI-anchored proteins from the endoplasmic reticulum to the Golgi apparatus in ceramides-depleted cells after SAM exposure. In Oryza sativa subsp. japonica (Rice), this protein is ASC1-like protein 3.